The sequence spans 65 residues: MNAPLERPANSVDPKLLEILVCPMTKGPLEYDAARQELISRSAKLAYPIRDGIPIMLPEEARKID.

This sequence belongs to the UPF0434 family.

The polypeptide is UPF0434 protein BRADO0313 (Bradyrhizobium sp. (strain ORS 278)).